We begin with the raw amino-acid sequence, 2070 residues long: Multiple PDZ domain protein (2070 aa).

The L27 domain maps to 1–63 (MLEAIDKNRA…SVQQLKDQVN (63 aa)). Residues 137-224 (VFELLKPPSG…TVQLVIARGS (88 aa)) enclose the PDZ 1 domain. The residue at position 230 (Ser-230) is a Phosphoserine. PDZ domains are found at residues 257–337 (TIEL…ARGA) and 377–463 (DVEL…MRRG). A Phosphoserine modification is found at Ser-483. PDZ domains are found at residues 553 to 634 (VAHV…CRRT) and 700 to 786 (HIEL…VAKP). Phosphoserine is present on residues Ser-790 and Ser-1078. The PDZ 6 domain occupies 1008–1089 (TINIAKGNSS…IGPDIKITYV (82 aa)). Positions 1121 to 1140 (DIPELPEREEGEGEESELQN) are disordered. The 93-residue stretch at 1151–1243 (RVELWREPSK…PVVFMVQSII (93 aa)) folds into the PDZ 7 domain. Arg-1170 carries the post-translational modification Omega-N-methylarginine. Positions 1278–1324 (ADKAPSQSESEPEKAPLCSVPPPPPSAFAEMGSDHTQSSASKISQDV) are disordered. Residues 1311-1321 (DHTQSSASKIS) show a composition bias toward polar residues. PDZ domains lie at 1350 to 1433 (MIEL…IRNK) and 1483 to 1564 (HLEL…HAEN). The disordered stretch occupies residues 1567–1612 (SQAVPSAAGAASGEKKNSSQSLMVPQSGSPEPESIRNTSRSSTPAI). Residues 1584-1610 (SSQSLMVPQSGSPEPESIRNTSRSSTP) show a composition bias toward polar residues. 2 consecutive PDZ domains span residues 1629–1712 (TIEI…YRDE) and 1725–1807 (TIEL…GRIK). Phosphoserine occurs at positions 1818 and 1824. 2 consecutive PDZ domains span residues 1862 to 1948 (TVEM…VAGG) and 1987 to 2070 (SITL…MVLS).

As to quaternary structure, interacts with CLDN5, DLG4, GRIN1, F11R/JAM, CLDN1, NG2, CRB1, MPP4 and PALS1. Interacts with HTR2A, HTR2B, HTR2C, PLEKHA1/TAPP1, PLEKHA2/TAPP2, CXADR, SYNGAP1, CAMK2A and CAMK2B. Interacts with FAT4 (via cytoplasmic domain). Interacts with DLL1. In terms of assembly, (Microbial infection) Interacts with human adenovirus type 9 E4-ORF1 protein. (Microbial infection) Interacts with human papillomavirus 18/HPV18 protein E6. In terms of tissue distribution, expressed in heart, brain, placenta, liver, skeletal muscle, kidney and pancreas.

The protein localises to the cell membrane. Its subcellular location is the apical cell membrane. It localises to the postsynaptic density. The protein resides in the cell projection. It is found in the dendrite. The protein localises to the cell junction. Its subcellular location is the tight junction. It localises to the synapse. The protein resides in the synaptosome. Functionally, member of the NMDAR signaling complex that may play a role in control of AMPAR potentiation and synaptic plasticity in excitatory synapses. Promotes clustering of HT2RC at the cell surface. This chain is Multiple PDZ domain protein (MPDZ), found in Homo sapiens (Human).